Consider the following 249-residue polypeptide: Isoprenyl transferase (249 aa).

Asp25 is an active-site residue. Residue Asp25 coordinates Mg(2+). Substrate contacts are provided by residues 26–29 (GNGR), Trp30, Arg38, His42, and 70–72 (STE). Catalysis depends on Asn73, which acts as the Proton acceptor. Residues Trp74, Arg76, Arg197, and 203–205 (RLS) each bind substrate. Glu216 contributes to the Mg(2+) binding site.

This sequence belongs to the UPP synthase family. As to quaternary structure, homodimer. It depends on Mg(2+) as a cofactor.

Functionally, catalyzes the condensation of isopentenyl diphosphate (IPP) with allylic pyrophosphates generating different type of terpenoids. This is Isoprenyl transferase from Streptococcus pyogenes serotype M1.